A 464-amino-acid polypeptide reads, in one-letter code: Cysteine--tRNA ligase (464 aa).

Cys28 contributes to the Zn(2+) binding site. Residues 30 to 40 carry the 'HIGH' region motif; sequence ITAYDFCHIGH. Residues Cys210, His235, and Glu239 each contribute to the Zn(2+) site. The 'KMSKS' region signature appears at 267 to 271; that stretch reads KMSKS. Lys270 is a binding site for ATP.

It belongs to the class-I aminoacyl-tRNA synthetase family. Monomer. Requires Zn(2+) as cofactor.

The protein resides in the cytoplasm. It carries out the reaction tRNA(Cys) + L-cysteine + ATP = L-cysteinyl-tRNA(Cys) + AMP + diphosphate. The chain is Cysteine--tRNA ligase from Buchnera aphidicola subsp. Baizongia pistaciae (strain Bp).